A 354-amino-acid chain; its full sequence is Peroxisomal membrane protein PEX32 (354 aa).

5 helical membrane passes run 24–44 (LLNM…VIFL), 63–83 (FIAI…ACTV), 84–104 (LPTI…TTID), 151–171 (GFSL…IFTV), and 173–193 (SFLL…SVAT). Asparagine 319 is a glycosylation site (N-linked (GlcNAc...) asparagine).

This sequence belongs to the PEX28-32 family. PEX30/31 subfamily.

It is found in the peroxisome membrane. The protein localises to the endoplasmic reticulum membrane. In terms of biological role, with PEX24, contributes to tethering of peroxisomes to the endoplasmic reticulum for organelle biogenesis, positioning and segregation. The sequence is that of Peroxisomal membrane protein PEX32 from Ogataea parapolymorpha (strain ATCC 26012 / BCRC 20466 / JCM 22074 / NRRL Y-7560 / DL-1) (Yeast).